Reading from the N-terminus, the 568-residue chain is MHGLSRLGNGSSNGRINIPSPSPPSSPRIRHTRGKSLAGGVYKQGLGERLVFLLFSIVFRRKGVLLLAPLLYIAGMLLFMGSFGFTVLDLGHGVEIVYRRGSPGSVYRSPKVFKRLWPVMEADVNGSSHNVLMEAWKPRVKSVWKPCISTNVSAAGSNSNGYFIIEANGGLNQQRLSICDAVAVAGLLNATLVIPIFHLNSVWRDSSKFGDIFDEDFFIYALSKNVNVVKELPKDVLERYNYNISSIVNLRLKAWSSPAYYLQKVLPQLLRLGAVRVAPFSNRLAHAVPAHIQGLRCLANFEALRFAEPIRLLAEKMVDRMVTKSVESGGKYVSVHLRFEMDMVAFSCCEYDFGQAEKLEMDMARERGWKGKFRRRGRVIRPGANRIDGKCPLTPLEVGMMLRGMGFNNSTLVYVAAGNIYKADKYMAPLRQMFPLLQTKDTLATPEELAPFKGHSSRLAALDYTVCLHSEVFVSTQGGNFPHFLIGHRRYLYKGHAETIKPDKRKLVQLLDKPSIRWDYFKKQMQDMLRHNDAKGVELRKPAASLYTFPMPDCMCKEPDPEPETDPA.

Low complexity predominate over residues 1–19; that stretch reads MHGLSRLGNGSSNGRINIP. The tract at residues 1–33 is disordered; sequence MHGLSRLGNGSSNGRINIPSPSPPSSPRIRHTR. Residues 65–85 form a helical; Signal-anchor for type II membrane protein membrane-spanning segment; that stretch reads LLLAPLLYIAGMLLFMGSFGF. Asn-125, Asn-151, Asn-189, and Asn-243 each carry an N-linked (GlcNAc...) asparagine glycan. A substrate-binding site is contributed by 336-338; the sequence is HLR. N-linked (GlcNAc...) asparagine glycosylation is found at Asn-408 and Asn-409.

The protein belongs to the glycosyltransferase GT106 family.

It localises to the membrane. The protein operates within glycan metabolism. This is O-fucosyltransferase 9 from Arabidopsis thaliana (Mouse-ear cress).